The following is a 262-amino-acid chain: MPNPVRPAVQLKDIRKNFGNLEVLHGVSLSANEGEVISILGSSGSGKSTLLRCVNMLEVPNAGSVAIMGEEIALEHRAGRLARPKDLKQVNRLRERAAMVFQGFNLWSHQTILQNVMEAPVHVQGRDRKACRDEAEALLERVGIASKRDAYPSELSGGQQQRAAIARALAMRPDVMLFDEPTSALDPELVGEVLKVMRDLAAEGRTMLIVTHEMDFARDVSSRTVFLHQGVIAEEGPSSEMFAHPRTDRFRQFLRRDGGTSH.

The ABC transporter domain occupies 9–254; the sequence is VQLKDIRKNF…PRTDRFRQFL (246 aa). 41 to 48 contacts ATP; that stretch reads GSSGSGKS.

The protein belongs to the ABC transporter superfamily.

It localises to the cell inner membrane. In terms of biological role, component of the octopine active transport system probably consisting of four subunits: Q, M, P and T. The protein is Octopine permease ATP-binding protein P (occP) of Rhizobium radiobacter (Agrobacterium tumefaciens).